We begin with the raw amino-acid sequence, 127 residues long: Aspartate 1-decarboxylase (127 aa).

The Schiff-base intermediate with substrate; via pyruvic acid role is filled by serine 25. Pyruvic acid (Ser) is present on serine 25. Threonine 57 contacts substrate. Catalysis depends on tyrosine 58, which acts as the Proton donor. 73-75 is a binding site for substrate; the sequence is GAA.

The protein belongs to the PanD family. Heterooctamer of four alpha and four beta subunits. Pyruvate serves as cofactor. In terms of processing, is synthesized initially as an inactive proenzyme, which is activated by self-cleavage at a specific serine bond to produce a beta-subunit with a hydroxyl group at its C-terminus and an alpha-subunit with a pyruvoyl group at its N-terminus.

Its subcellular location is the cytoplasm. The catalysed reaction is L-aspartate + H(+) = beta-alanine + CO2. Its pathway is cofactor biosynthesis; (R)-pantothenate biosynthesis; beta-alanine from L-aspartate: step 1/1. In terms of biological role, catalyzes the pyruvoyl-dependent decarboxylation of aspartate to produce beta-alanine. The sequence is that of Aspartate 1-decarboxylase from Staphylococcus carnosus (strain TM300).